Here is a 164-residue protein sequence, read N- to C-terminus: Lipoprotein signal peptidase (164 aa).

3 helical membrane-spanning segments follow: residues 12–32 (WLWL…LILQ), 70–90 (WFFA…MYRL), and 102–122 (ALII…GFVV). Active-site residues include Asp123 and Asp141. A helical membrane pass occupies residues 137–157 (FNLADTAICVGAALIVLEGFL).

Belongs to the peptidase A8 family.

Its subcellular location is the cell inner membrane. The enzyme catalyses Release of signal peptides from bacterial membrane prolipoproteins. Hydrolyzes -Xaa-Yaa-Zaa-|-(S,diacylglyceryl)Cys-, in which Xaa is hydrophobic (preferably Leu), and Yaa (Ala or Ser) and Zaa (Gly or Ala) have small, neutral side chains.. It participates in protein modification; lipoprotein biosynthesis (signal peptide cleavage). Its function is as follows. This protein specifically catalyzes the removal of signal peptides from prolipoproteins. The chain is Lipoprotein signal peptidase from Shigella boydii serotype 4 (strain Sb227).